A 322-amino-acid polypeptide reads, in one-letter code: Putative ankyrin repeat protein L897 (322 aa).

3 ANK repeats span residues 88–117 (DNEYYTYFALSIGAMDVFKWLISHGFSYDM), 181–210 (NIIDVIEYAVQINNCDIIKILVKKFIFWAN), and 248–277 (NKNEALKYAIMMKNYDMIELLINYNIQTDH).

The chain is Putative ankyrin repeat protein L897 from Acanthamoeba polyphaga (Amoeba).